A 515-amino-acid polypeptide reads, in one-letter code: Elongation factor 1-alpha S (515 aa).

One can recognise a tr-type G domain in the interval 5-258 (KTHINLVVIG…DAMKPPKRPT (254 aa)). Residues 14–21 (GHVDAGKS) are G1. Position 14-21 (14-21 (GHVDAGKS)) interacts with GTP. At Lys55 the chain carries N6,N6-dimethyllysine. Residues 70–74 (GITID) are G2. The residue at position 79 (Lys79) is an N6,N6,N6-trimethyllysine. A G3 region spans residues 91 to 94 (DAPG). Residues 91 to 95 (DAPGH) and 151 to 154 (NKMD) contribute to the GTP site. Residues 151–154 (NKMD) are G4. Residues 187–206 (KKDKGDKKKGDKKEKKDKKD) are disordered. Residues 189–206 (DKGDKKKGDKKEKKDKKD) are compositionally biased toward basic and acidic residues. Positions 222 to 224 (SGW) are G5. Lys289 is subject to N6-methyllysine. Residue Lys334 is modified to N6,N6,N6-trimethyllysine. A disordered region spans residues 396 to 419 (KRGKQTHDVSDDTEWATKDDAEPR). Residues 398–419 (GKQTHDVSDDTEWATKDDAEPR) show a composition bias toward basic and acidic residues. Lys441 is modified (N6,N6,N6-trimethyllysine).

This sequence belongs to the TRAFAC class translation factor GTPase superfamily. Classic translation factor GTPase family. EF-Tu/EF-1A subfamily.

Its subcellular location is the cytoplasm. This protein promotes the GTP-dependent binding of aminoacyl-tRNA to the A-site of ribosomes during protein biosynthesis. This Porphyra purpurea (Red seaweed) protein is Elongation factor 1-alpha S (TEF-S).